The sequence spans 153 residues: MTDQPAKKVHSAPTLKVQLRSENAIAPTKGSAAAAGYDIYASQDCVIPGRGQGLVATDVSFTVPVGTYGRIAPRSGLAVKHGIQTGAGVVDRDYTGEVKIVLFNHSDRDYAVKRGDRVAQLVLERIVDDAEVVVVESLDESSRGEGGFGSTGN.

DUMP contacts are provided by S75, G88, D91, Y94, K99, R143, F148, and G149.

This sequence belongs to the dUTPase family. As to quaternary structure, homotrimer. It depends on Mg(2+) as a cofactor.

It carries out the reaction dUTP + H2O = dUMP + diphosphate + H(+). The protein operates within pyrimidine metabolism; dUMP biosynthesis; dUMP from dCTP (dUTP route): step 2/2. In terms of biological role, involved in nucleotide metabolism via production of dUMP, the immediate precursor of thymidine nucleotides, and decreases the intracellular concentration of dUTP so that uracil cannot be incorporated into DNA. This chain is Deoxyuridine 5'-triphosphate nucleotidohydrolase (DUT1), found in Eremothecium gossypii (strain ATCC 10895 / CBS 109.51 / FGSC 9923 / NRRL Y-1056) (Yeast).